The primary structure comprises 369 residues: Putative gustatory receptor 39b (369 aa).

Residues 1–32 lie on the Cytoplasmic side of the membrane; sequence MLYSFHPYLKYFALLGLVPWSESCAQSKFVQK. The helical transmembrane segment at 33–53 threads the bilayer; it reads VYSAILIILNAVHFGISIYFP. The Extracellular segment spans residues 54–59; sequence QSAELF. The helical transmembrane segment at 60 to 80 threads the bilayer; it reads LSLMVNVIVFVARIVCVTVII. The Cytoplasmic portion of the chain corresponds to 81–122; sequence LQVMVHYDDYFRFCREMKYLGLRLQCELKIHVGRLKWQSYAK. The chain crosses the membrane as a helical span at residues 123–143; sequence ILALGIGFLVTVLPSIYVALS. The Extracellular portion of the chain corresponds to 144 to 147; the sequence is GSLL. A helical membrane pass occupies residues 148–168; the sequence is YFWSSLLSILIIRMQFVLVLL. Topologically, residues 169 to 224 are cytoplasmic; it reads NVELLGHHVSLLGIRLQNVLECHLMGANCTLDGNANRLCSLEFLLALKQSHMQLHY. Residues 225 to 245 traverse the membrane as a helical segment; that stretch reads LFTHFNDLFGWSILGTYVVLF. At 246-265 the chain is on the extracellular side; that stretch reads SDSTVNIYWTQQVLVEVYEY. The helical transmembrane segment at 266–286 threads the bilayer; the sequence is KYLYATFSVFVPSFFNILVFC. The Cytoplasmic segment spans residues 287–348; sequence RCGEFCQRQS…EGFMSTDNSL (62 aa). The helical transmembrane segment at 349-368 threads the bilayer; it reads LMSILAAKVTYLIVLMQFSS. Position 369 (Val-369) is a topological domain, extracellular.

Belongs to the insect chemoreceptor superfamily. Gustatory receptor (GR) family. Gr2a subfamily. Expressed in the adult labellar chemosensory neurons and in abdominal ganglions. In larvae, is expressed in neurons of the dorsal and posterior pharyngeal sense organs.

It is found in the cell membrane. Probable gustatory receptor which mediates acceptance or avoidance behavior, depending on its substrates. Has also atypical sensory function in organ not limited to conventional taste sensing like abdominal ganglions. In Drosophila melanogaster (Fruit fly), this protein is Putative gustatory receptor 39b (Gr39b).